Reading from the N-terminus, the 101-residue chain is DNA-binding protein Fis (101 aa).

Positions 77–96 (QTRAANMLGINRGTLRKKLK) form a DNA-binding region, H-T-H motif.

Belongs to the transcriptional regulatory Fis family. Homodimer.

Functionally, activates ribosomal RNA transcription. Plays a direct role in upstream activation of rRNA promoters. This is DNA-binding protein Fis from Shewanella frigidimarina (strain NCIMB 400).